A 366-amino-acid chain; its full sequence is 5-hydroxytryptamine receptor 1F (366 aa).

Over M1 to I24 the chain is Extracellular. Residues N5 and N10 are each glycosylated (N-linked (GlcNAc...) asparagine). Residues L25–I49 traverse the membrane as a helical segment. Over V50 to N59 the chain is Cytoplasmic. The helical transmembrane segment at Y60 to I81 threads the bilayer. The Extracellular portion of the chain corresponds to V82–C96. C96 and C172 are oxidised to a cystine. Residues D97 to L119 traverse the membrane as a helical segment. 2 residues coordinate serotonin: D103 and C107. Positions D120–Y122 match the DRY motif; important for ligand-induced conformation changes motif. Residues D120–H139 are Cytoplasmic-facing. Residues A140 to L159 form a helical membrane-spanning segment. Topologically, residues F160–H178 are extracellular. A helical membrane pass occupies residues I179 to Y202. The Cytoplasmic portion of the chain corresponds to K203–A291. A helical transmembrane segment spans residues A292 to V315. Residues V316 to E327 are Extracellular-facing. A helical transmembrane segment spans residues M328–F350. The short motif at N343 to Y347 is the NPxxY motif; important for ligand-induced conformation changes and signaling element. At N351–N366 the chain is on the cytoplasmic side.

It belongs to the G-protein coupled receptor 1 family.

The protein localises to the cell membrane. In terms of biological role, G-protein coupled receptor for 5-hydroxytryptamine (serotonin). Also functions as a receptor for various alkaloids and psychoactive substances. Ligand binding causes a conformation change that triggers signaling via guanine nucleotide-binding proteins (G proteins) and modulates the activity of downstream effectors, such as adenylate cyclase. HTR1F is coupled to G(i)/G(o) G alpha proteins and mediates inhibitory neurotransmission by inhibiting adenylate cyclase activity. The protein is 5-hydroxytryptamine receptor 1F (Htr1f) of Rattus norvegicus (Rat).